We begin with the raw amino-acid sequence, 434 residues long: Ribosomal protein uS12 methylthiotransferase RimO (434 aa).

In terms of domain architecture, MTTase N-terminal spans 6–122 (NRVFLLSLGC…ILTAIGARYR (117 aa)). Residues C15, C51, C85, C146, C150, and C153 each contribute to the [4Fe-4S] cluster site. The Radical SAM core domain occupies 132 to 361 (TAPGHTSFLK…MELQEGISEE (230 aa)). The 68-residue stretch at 364 to 431 (KRLEGREIAV…PYELFGTVLK (68 aa)) folds into the TRAM domain.

This sequence belongs to the methylthiotransferase family. RimO subfamily. It depends on [4Fe-4S] cluster as a cofactor.

The protein localises to the cytoplasm. It catalyses the reaction L-aspartate(89)-[ribosomal protein uS12]-hydrogen + (sulfur carrier)-SH + AH2 + 2 S-adenosyl-L-methionine = 3-methylsulfanyl-L-aspartate(89)-[ribosomal protein uS12]-hydrogen + (sulfur carrier)-H + 5'-deoxyadenosine + L-methionine + A + S-adenosyl-L-homocysteine + 2 H(+). Its function is as follows. Catalyzes the methylthiolation of an aspartic acid residue of ribosomal protein uS12. The chain is Ribosomal protein uS12 methylthiotransferase RimO from Chlorobium phaeovibrioides (strain DSM 265 / 1930) (Prosthecochloris vibrioformis (strain DSM 265)).